Here is a 286-residue protein sequence, read N- to C-terminus: 3-amino-tetrahydro-pyrrolizinone reductase (286 aa).

Tyr146 functions as the Proton acceptor in the catalytic mechanism.

It belongs to the short-chain dehydrogenases/reductases (SDR) family.

The catalysed reaction is 3-amino-5,6,7,7a-tetrahydro-1H-pyrrolizin-1-one + AH2 = 3-amino-tetrahydro-1H-pyrrolizin-1-ol + A. Functionally, involved in the biosynthetic pathway of pyrrolizwilline, a pyrrolizidine alkaloid. Catalyzes the reduction of 3-amino-tetrahydro-pyrrolizinone to 3-amino-tetrahydro-pyrrolizinol. The sequence is that of 3-amino-tetrahydro-pyrrolizinone reductase (xhpD) from Xenorhabdus hominickii.